A 561-amino-acid polypeptide reads, in one-letter code: Malate synthase, glyoxysomal (561 aa).

Catalysis depends on R177, which acts as the Proton acceptor. D462 functions as the Proton donor in the catalytic mechanism. A Microbody targeting signal motif is present at residues 559–561 (SRL).

The protein belongs to the malate synthase family.

The protein resides in the glyoxysome. The catalysed reaction is glyoxylate + acetyl-CoA + H2O = (S)-malate + CoA + H(+). It participates in carbohydrate metabolism; glyoxylate cycle; (S)-malate from isocitrate: step 2/2. This chain is Malate synthase, glyoxysomal, found in Brassica napus (Rape).